A 372-amino-acid polypeptide reads, in one-letter code: MKLLSLHVQDFRNLAAVALAPSPRATVLLGENGQGKTNLLEAIYFLTTLKPLRAVRLAELVRFGADQGAVAGDFEGPGGVRRVAVQVAAGGRTATLDGKALGSGARLDDYFEGLASVCFSPDDLLLVKAGPDGRRRFLDRAAFNRWPAVLGEAREYVRALRARNAALRAGPAEVEASFREPLVRAGARLLVRRRELVAELAPRLQAAFAEISGPEAPEAHLAYRAAGGVDVAHPEAEVAARLAHALEARLERDREKGFTSAGPHMDDLVLALGGKGARLYGSQGQQRALVLALKIAEIENLRAALGRPPLLLLDDVSSELDPAKNRFLLGYLAALPAQAFLTSTDRRLIEPAAGPDTAFFEVRSGVVSPLVS.

30-37 (GENGQGKT) lines the ATP pocket.

This sequence belongs to the RecF family.

The protein localises to the cytoplasm. Its function is as follows. The RecF protein is involved in DNA metabolism; it is required for DNA replication and normal SOS inducibility. RecF binds preferentially to single-stranded, linear DNA. It also seems to bind ATP. The chain is DNA replication and repair protein RecF from Anaeromyxobacter sp. (strain K).